The following is a 388-amino-acid chain: Na(+)/H(+) antiporter NhaA (388 aa).

Transmembrane regions (helical) follow at residues 13–33 (AAGGIILIVAAIIALIMANTP), 36–56 (GIYHAFLNLPVMVKVSSLEIA), 59–79 (LLLWINDGLMAIFFLVVGLEV), 95–115 (VFPAIAALGGMLAPALIYLMF), 125–145 (GWAIPAATDIAFALGVMALLG), 154–174 (VFLLALAIIDDLGVIVIIALF), 179–199 (VSMAALGVAAASIAVLAFMNW), 213–233 (LVLWVAILKSGVHATLAGVII), 259–279 (VAFLILPLFAFANAGVSLQGV), 287–307 (LLPVGIAAGLFIGKPLGIFTF), 328–348 (VFAVSVLCGIGFTMSIFIASL), and 363–383 (LGILIGSTTAAVVGYGLLRMS).

Belongs to the NhaA Na(+)/H(+) (TC 2.A.33) antiporter family.

The protein resides in the cell inner membrane. The catalysed reaction is Na(+)(in) + 2 H(+)(out) = Na(+)(out) + 2 H(+)(in). Its function is as follows. Na(+)/H(+) antiporter that extrudes sodium in exchange for external protons. The sequence is that of Na(+)/H(+) antiporter NhaA from Serratia proteamaculans (strain 568).